Here is a 424-residue protein sequence, read N- to C-terminus: Delta(14)-sterol reductase erg24 (424 aa).

2 helical membrane-spanning segments follow: residues 19 to 39 (IGALGVTVLTTVVSFGSFYIC) and 112 to 132 (LILGVVCTSIYLLGASCMEFI). NADP(+) contacts are provided by residues lysine 317, arginine 321, leucine 344, tryptophan 349, and 356 to 357 (NY). A helical transmembrane segment spans residues 370 to 390 (PAGFGSPIPYFYVAYFGVLLV). NADP(+) is bound by residues aspartate 396, 400 to 404 (CRVKY), and tyrosine 411.

Belongs to the ERG4/ERG24 family.

Its subcellular location is the endoplasmic reticulum membrane. It catalyses the reaction 4,4-dimethyl-5alpha-cholesta-8,24-dien-3beta-ol + NADP(+) = 4,4-dimethyl-5alpha-cholesta-8,14,24-trien-3beta-ol + NADPH + H(+). Its pathway is steroid biosynthesis; zymosterol biosynthesis; zymosterol from lanosterol: step 2/6. It functions in the pathway steroid metabolism; ergosterol biosynthesis. Its function is as follows. Delta(14)-sterol reductase; part of the third module of ergosterol biosynthesis pathway that includes by the late steps of the pathway. Erg24 reduces the C14=C15 double bond of 4,4-dimethyl-cholesta-8,14,24-trienol to produce 4,4-dimethyl-cholesta-8,24-dienol. The third module or late pathway involves the ergosterol synthesis itself through consecutive reactions that mainly occur in the endoplasmic reticulum (ER) membrane. Firstly, the squalene synthase erg9 catalyzes the condensation of 2 farnesyl pyrophosphate moieties to form squalene, which is the precursor of all steroids. Secondly, squalene is converted into lanosterol by the consecutive action of the squalene epoxidase erg1 and the lanosterol synthase erg7. The lanosterol 14-alpha-demethylase erg11/cyp1 catalyzes C14-demethylation of lanosterol to produce 4,4'-dimethyl cholesta-8,14,24-triene-3-beta-ol. In the next steps, a complex process involving various demethylation, reduction and desaturation reactions catalyzed by the C-14 reductase erg24 and the C-4 demethylation complex erg25-erg26-erg27 leads to the production of zymosterol. Erg28 likely functions in the C-4 demethylation complex reaction by tethering erg26 and Erg27 to the endoplasmic reticulum or to facilitate interaction between these proteins. Then, the sterol 24-C-methyltransferase erg6 catalyzes the methyl transfer from S-adenosyl-methionine to the C-24 of zymosterol to form fecosterol. The C-8 sterol isomerase erg2 catalyzes the reaction which results in unsaturation at C-7 in the B ring of sterols and thus converts fecosterol to episterol. The sterol-C5-desaturases erg31 and erg32 then catalyze the introduction of a C-5 double bond in the B ring to produce 5-dehydroepisterol. The C-22 sterol desaturase erg5 further converts 5-dehydroepisterol into ergosta-5,7,22,24(28)-tetraen-3beta-ol by forming the C-22(23) double bond in the sterol side chain. Finally, ergosta-5,7,22,24(28)-tetraen-3beta-ol is substrate of the C-24(28) sterol reductase erg4 to produce ergosterol. In the genus Schizosaccharomyces, a second route exists between lanosterol and fecosterol, via the methylation of lanosterol to eburicol by erg6, followed by C14-demethylation by erg11/cyp1 and C4-demethylation by the demethylation complex erg25-erg26-erg27. This is Delta(14)-sterol reductase erg24 from Schizosaccharomyces pombe (strain 972 / ATCC 24843) (Fission yeast).